An 82-amino-acid polypeptide reads, in one-letter code: UPF0291 protein LJ_1507 (82 aa).

A disordered region spans residues 61-82; sequence DGKEVTSEKAKEAQRRKGLRKD.

This sequence belongs to the UPF0291 family.

The protein resides in the cytoplasm. This chain is UPF0291 protein LJ_1507, found in Lactobacillus johnsonii (strain CNCM I-12250 / La1 / NCC 533).